The primary structure comprises 967 residues: Glutamate receptor 2.6 (967 aa).

The N-terminal stretch at 1–31 is a signal peptide; it reads MSLFNHLLSRALPLWLLFFINFLVLLGKSQQ. Topologically, residues 32-590 are extracellular; sequence EVLQVQVGIV…WVFLKPLTRE (559 aa). N-linked (GlcNAc...) asparagine glycosylation is found at N45, N57, N121, N336, N345, N424, and N550. A helical transmembrane segment spans residues 591-611; the sequence is LWFLTAASFLYIGIMVWIFEY. At 612–621 the chain is on the cytoplasmic side; the sequence is QASGDFRKQS. Residues 622–642 traverse the membrane as a helical segment; the sequence is IINKISNVFYFSFSTLFFAHM. Over 643–651 the chain is Cytoplasmic; sequence RPSESIFTR. A helical transmembrane segment spans residues 652–672; that stretch reads VLVVVWCFVLLILTQSYTATL. Over 673–832 the chain is Extracellular; sequence TSMLTVQELR…DSPIRLDHHS (160 aa). N-linked (GlcNAc...) asparagine glycosylation occurs at N795. A helical transmembrane segment spans residues 833–853; that stretch reads FEALFTIVFVVSMLLLLAMLV. Over 854-967 the chain is Cytoplasmic; that stretch reads CRRYRQESKS…AALFSRIKSA (114 aa). A compositionally biased stretch (polar residues) spans 864–874; the sequence is GEINANNSPTD. The segment at 864-913 is disordered; sequence GEINANNSPTDGNMRAPPNQPTDDNMRAPTSPPIDDQVLEPPGPALNEAD.

This sequence belongs to the glutamate-gated ion channel (TC 1.A.10.1) family. As to quaternary structure, may form heteromers. As to expression, expressed predominantly in roots.

The protein localises to the membrane. In terms of biological role, glutamate-gated receptor that probably acts as a non-selective cation channel. May be involved in light-signal transduction and calcium homeostasis via the regulation of calcium influx into cells. The protein is Glutamate receptor 2.6 (GLR2.6) of Arabidopsis thaliana (Mouse-ear cress).